The sequence spans 223 residues: DNA mismatch repair protein MutH (223 aa).

The protein belongs to the MutH family.

Its subcellular location is the cytoplasm. In terms of biological role, sequence-specific endonuclease that cleaves unmethylated GATC sequences. It is involved in DNA mismatch repair. This is DNA mismatch repair protein MutH from Shewanella baltica (strain OS223).